The following is a 655-amino-acid chain: Kelch-like protein 13 (655 aa).

In terms of domain architecture, BTB spans 92–161; it reads CDVTLMPGDT…IYTAKLSLNM (70 aa). Residues 196 to 297 enclose the BACK domain; that stretch reads CVEVGRIANT…TPQELINYVQ (102 aa). Kelch repeat units follow at residues 341–389, 390–441, 442–488, 490–535, 537–587, and 588–636; these read HLVT…VIGN, FLYV…ALKG, YLYA…VYGG, MYIS…TVGE, LYVI…VFEN, and KIYV…TLTV.

In terms of assembly, component of the BCR(KLHL9-KLHL13) E3 ubiquitin ligase complex, at least composed of CUL3, KLHL9, KLHL13 and RBX1. Interacts with AURKB.

It participates in protein modification; protein ubiquitination. Functionally, substrate-specific adapter of a BCR (BTB-CUL3-RBX1) E3 ubiquitin-protein ligase complex required for mitotic progression and cytokinesis. The BCR(KLHL9-KLHL13) E3 ubiquitin ligase complex mediates the ubiquitination of AURKB and controls the dynamic behavior of AURKB on mitotic chromosomes and thereby coordinates faithful mitotic progression and completion of cytokinesis. This chain is Kelch-like protein 13 (KLHL13), found in Bos taurus (Bovine).